The following is a 207-amino-acid chain: Guanylate kinase (207 aa).

The 181-residue stretch at 4–184 folds into the Guanylate kinase-like domain; sequence NMYYAISAPS…TLNKIKTIII (181 aa). 11 to 18 contributes to the ATP binding site; sequence APSGTGKS.

It belongs to the guanylate kinase family.

The protein resides in the cytoplasm. It carries out the reaction GMP + ATP = GDP + ADP. In terms of biological role, essential for recycling GMP and indirectly, cGMP. The polypeptide is Guanylate kinase (Wigglesworthia glossinidia brevipalpis).